Consider the following 115-residue polypeptide: Parathyroid hormone (115 aa).

The N-terminal stretch at 1–25 (MMSAKDTVKVMVVMLAICFLARSDG) is a signal peptide. A propeptide spanning residues 26-31 (KPIKKR) is cleaved from the precursor. The tract at residues 51–69 (RVEWLRKKLQDVHNFVALG) is important for receptor binding. The segment at 75–98 (RDGGSQRPRKKEDNVLVESHQKSL) is disordered.

Belongs to the parathyroid hormone family. In terms of assembly, interacts with PTH1R (via N-terminal extracellular domain).

It is found in the secreted. Its function is as follows. Parathyroid hormone elevates calcium level by dissolving the salts in bone and preventing their renal excretion. Acts by binding to its receptor, PTH1R, activating G protein-coupled receptor signaling. Stimulates [1-14C]-2-deoxy-D-glucose (2DG) transport and glycogen synthesis in osteoblastic cells. The polypeptide is Parathyroid hormone (PTH) (Sus scrofa (Pig)).